The following is a 180-amino-acid chain: Translation initiation factor IF-3 (180 aa).

This sequence belongs to the IF-3 family. In terms of assembly, monomer.

The protein localises to the cytoplasm. Functionally, IF-3 binds to the 30S ribosomal subunit and shifts the equilibrium between 70S ribosomes and their 50S and 30S subunits in favor of the free subunits, thus enhancing the availability of 30S subunits on which protein synthesis initiation begins. The polypeptide is Translation initiation factor IF-3 (Caldanaerobacter subterraneus subsp. tengcongensis (strain DSM 15242 / JCM 11007 / NBRC 100824 / MB4) (Thermoanaerobacter tengcongensis)).